Consider the following 123-residue polypeptide: Small ribosomal subunit protein uS12 (123 aa).

The segment at 1-25 (MPTINQLVRKPRKSRSALNKAPALQ) is disordered. Position 90 is a 3-methylthioaspartic acid (Asp-90).

This sequence belongs to the universal ribosomal protein uS12 family. Part of the 30S ribosomal subunit. Contacts proteins S8 and S17. May interact with IF1 in the 30S initiation complex.

Functionally, with S4 and S5 plays an important role in translational accuracy. Interacts with and stabilizes bases of the 16S rRNA that are involved in tRNA selection in the A site and with the mRNA backbone. Located at the interface of the 30S and 50S subunits, it traverses the body of the 30S subunit contacting proteins on the other side and probably holding the rRNA structure together. The combined cluster of proteins S8, S12 and S17 appears to hold together the shoulder and platform of the 30S subunit. The sequence is that of Small ribosomal subunit protein uS12 from Ehrlichia canis (strain Jake).